The chain runs to 499 residues: Rhodopsin, GQ-coupled (499 aa).

At 1 to 50 the chain is on the extracellular side; that stretch reads MADNKSTLPGLPDINGTLNRSMTPNTGWEGPYDMSVHLHWTQFPPVTEEW. N-linked (GlcNAc...) asparagine glycosylation is found at Asn-4, Asn-15, and Asn-19. The helical transmembrane segment at 51–75 threads the bilayer; it reads HYIIGVYITIVGLLGIMGNTTVVYI. Topologically, residues 76 to 87 are cytoplasmic; it reads FSNTKSLRSPSN. The helical transmembrane segment at 88–114 threads the bilayer; the sequence is LFVVNLAVSDLIFSAVNGFPLLTVSSF. The Extracellular portion of the chain corresponds to 115–128; it reads HQKWIFGSLFCQLY. Cysteines 125 and 203 form a disulfide. Residues 129–148 traverse the membrane as a helical segment; sequence GFVGGVFGLMSINTLTAISI. The Cytoplasmic portion of the chain corresponds to 149–168; that stretch reads DRYVVITKPLQASQTMTRRK. The helical transmembrane segment at 169-192 threads the bilayer; the sequence is VHLMIVIVWVLSILLSIPPFFGWG. Topologically, residues 193-216 are extracellular; that stretch reads AYIPEGFQTSCTFDYLTKTARTRT. Residues 217–244 traverse the membrane as a helical segment; that stretch reads YIVVLYLFGFLIPLIIIGVCYVLIIRGV. At 245 to 278 the chain is on the cytoplasmic side; sequence RRHDQKMLTITRSMKTEDARANNKRARSELRISK. Residues 279-302 traverse the membrane as a helical segment; sequence IAMTVTCLFIISWSPYAIIALIAQ. The Extracellular segment spans residues 303–310; sequence FGPAHWIT. A helical transmembrane segment spans residues 311–335; it reads PLVSELPMMLAKSSSMHNPVVYALS. Lys-322 bears the N6-(retinylidene)lysine mark. The Cytoplasmic portion of the chain corresponds to 336–499; the sequence is HPKFRKALYQ…QRVNGLTFNS (164 aa). 2 S-palmitoyl cysteine lipidation sites follow: Cys-353 and Cys-354.

The protein belongs to the G-protein coupled receptor 1 family. Opsin subfamily. Post-translationally, phosphorylated on some or all of the serine and threonine residues present in the C-terminal region. As to expression, retina. Expressed in the depolarizing cell layer of the photoreceptor cells distant from the lens.

The protein resides in the membrane. Visual pigments such as rhodopsin and porphyropsin are light-absorbing molecules that mediate vision. Rhodopsin consists of an apoprotein, opsin, covalently linked to 11-cis-retinal. This receptor is coupled to the activation of phospholipase C. Porphyropsin consists of opsin covalently linked to 11-cis 3,4-didehydroretinal. In Mizuhopecten yessoensis (Japanese scallop), this protein is Rhodopsin, GQ-coupled (SCOP1).